Reading from the N-terminus, the 346-residue chain is NADH-quinone oxidoreductase subunit H (346 aa).

Transmembrane regions (helical) follow at residues 6–26, 76–96, 128–148, 166–186, 198–218, 260–280, 289–309, and 324–344; these read ILFWLLKSGLFFFILITACAY, IMYLIAPAISMTCAIMAWSVV, ILFLFAISSLAVYGIIIAGWA, ISYELPLSMSVVSIVILTGSL, LWNIFKLPGFIAFCLFVVAMF, ITMSCVVTLLFFGGYQVPFGI, LFGLFFFLGKVLFFTFLFVWV, and LGWKKLIPWAVLNILIASLYI.

This sequence belongs to the complex I subunit 1 family. In terms of assembly, NDH-1 is composed of 14 different subunits. Subunits NuoA, H, J, K, L, M, N constitute the membrane sector of the complex.

It localises to the cell inner membrane. It carries out the reaction a quinone + NADH + 5 H(+)(in) = a quinol + NAD(+) + 4 H(+)(out). Functionally, NDH-1 shuttles electrons from NADH, via FMN and iron-sulfur (Fe-S) centers, to quinones in the respiratory chain. The immediate electron acceptor for the enzyme in this species is believed to be ubiquinone. Couples the redox reaction to proton translocation (for every two electrons transferred, four hydrogen ions are translocated across the cytoplasmic membrane), and thus conserves the redox energy in a proton gradient. This subunit may bind ubiquinone. In Leptospira borgpetersenii serovar Hardjo-bovis (strain JB197), this protein is NADH-quinone oxidoreductase subunit H.